We begin with the raw amino-acid sequence, 56 residues long: VPANCLLPMKVGPCRARVPRFYYNSSSGKCEGFTYGGCGANANKFQTKAQCEKACA.

Residues 5–55 (CLLPMKVGPCRARVPRFYYNSSSGKCEGFTYGGCGANANKFQTKAQCEKAC) enclose the BPTI/Kunitz inhibitor domain. Intrachain disulfides connect Cys5–Cys55, Cys14–Cys38, and Cys30–Cys51.

The protein belongs to the venom Kunitz-type family. Sea anemone type 2 potassium channel toxin subfamily. Expressed by acrorhagi.

Its subcellular location is the secreted. The protein resides in the nematocyst. Its function is as follows. Serine protease inhibitor that is strongly active against trypsin (900 IU/mg) and moderately active against plasmin. The chain is PI-actitoxin-Afv2b from Anthopleura fuscoviridis (Sea anemone).